Reading from the N-terminus, the 193-residue chain is MKRYLSVALAALVLTGCITQPPVEPTTPPVTIEPVTPPVPETPPPVDNVPPPPKMEQSIDWAASVEPLVAQMVNSNDVANGSILLLDSVKNNTNGRLPTAKATSALHQVLSSNKKFVLISPQQLAVAKQTLGLSEEDSLGSRSKAIGLARYVSAQYVLYSDVSGDVKSPTIEMQLMQAQTGEIIWSGNGPVKR.

The N-terminal stretch at 1–16 is a signal peptide; the sequence is MKRYLSVALAALVLTG. Residue cysteine 17 is the site of N-palmitoyl cysteine attachment. Cysteine 17 carries the S-diacylglycerol cysteine lipid modification. A disordered region spans residues 24-55; sequence EPTTPPVTIEPVTPPVPETPPPVDNVPPPPKM. Positions 35–54 are enriched in pro residues; sequence VTPPVPETPPPVDNVPPPPK.

It belongs to the LpoB family. Interacts with PBP1b.

It is found in the cell outer membrane. In terms of biological role, regulator of peptidoglycan synthesis that is essential for the function of penicillin-binding protein 1B (PBP1b). The sequence is that of Penicillin-binding protein activator LpoB from Yersinia enterocolitica serotype O:8 / biotype 1B (strain NCTC 13174 / 8081).